The primary structure comprises 85 residues: RNA-binding protein KhpA (85 aa).

A KH domain is found at 32 to 85 (YLEYNLTVNPEDIGRVIGRQGRVASAIRTIVYSVRVSGPKRVRLTIEDGQQKNS).

The protein belongs to the KhpA RNA-binding protein family. Forms a complex with KhpB.

It is found in the cytoplasm. A probable RNA chaperone. Forms a complex with KhpB which binds to cellular RNA and controls its expression. Plays a role in peptidoglycan (PG) homeostasis and cell length regulation. In terms of biological role, necessary for correct cell elongation. The protein is RNA-binding protein KhpA of Lactiplantibacillus plantarum (strain ATCC BAA-793 / NCIMB 8826 / WCFS1) (Lactobacillus plantarum).